A 294-amino-acid chain; its full sequence is Retinoic acid receptor responder protein 1 (294 aa).

The Lumenal segment spans residues 1–20 (MQPRRQRLPAPWSGPRGPRP). The helical; Signal-anchor for type III membrane protein transmembrane segment at 21 to 42 (TAPLLALLLLLAPVAAPAGSGD) threads the bilayer. 2 consecutive Cystatin LXN-type domains span residues 38 to 153 (AGSG…EKKK) and 173 to 276 (EIVS…TPEE). An O-linked (Xyl...) (chondroitin sulfate) serine glycan is attached at serine 40. The Cytoplasmic portion of the chain corresponds to 43 to 294 (PDDPGQPQDA…AVVPTELSNF (252 aa)). Residues 273-294 (TPEEASGTEEGSAVVPTELSNF) form a disordered region.

Belongs to the protease inhibitor I47 (latexin) family. In terms of assembly, interacts with AGBL2, KIF11 and MAPRE1. Not N-glycosylated. O-glycosylated; contains chondroitin sulfate. As to expression, detected in urine (at protein level).

It is found in the membrane. The protein resides in the secreted. Functionally, inhibitor of the cytoplasmic carboxypeptidase AGBL2, may regulate the alpha-tubulin tyrosination cycle. The polypeptide is Retinoic acid receptor responder protein 1 (RARRES1) (Homo sapiens (Human)).